The primary structure comprises 95 residues: Phosphoribosyl-ATP pyrophosphatase (95 aa).

The protein belongs to the PRA-PH family.

Its subcellular location is the cytoplasm. The catalysed reaction is 1-(5-phospho-beta-D-ribosyl)-ATP + H2O = 1-(5-phospho-beta-D-ribosyl)-5'-AMP + diphosphate + H(+). It functions in the pathway amino-acid biosynthesis; L-histidine biosynthesis; L-histidine from 5-phospho-alpha-D-ribose 1-diphosphate: step 2/9. The chain is Phosphoribosyl-ATP pyrophosphatase from Methanosphaera stadtmanae (strain ATCC 43021 / DSM 3091 / JCM 11832 / MCB-3).